We begin with the raw amino-acid sequence, 586 residues long: NudC domain-containing protein 1 (586 aa).

One can recognise a CS domain in the interval 275–364 (KREPLYNWQQ…EPGCTWAELV (90 aa)).

Its subcellular location is the cytoplasm. The protein localises to the nucleus. This Xenopus laevis (African clawed frog) protein is NudC domain-containing protein 1.